The chain runs to 211 residues: Inactive ribonuclease-like protein 10 (211 aa).

Positions 1–24 are cleaved as a signal peptide; the sequence is MKLTLVQIFFMMLLLLLGLGVGLG.

Belongs to the pancreatic ribonuclease family. Post-translationally, the N-terminus is blocked. Glycosylated.

Its subcellular location is the secreted. Functionally, secreted proximal epididymal protein required for post-testicular sperm maturation and male fertility. May be involved in sperm adhesion to the egg zona pellucida. Does not have ribonuclease activity. This Bos taurus (Bovine) protein is Inactive ribonuclease-like protein 10 (RNASE10).